The primary structure comprises 375 residues: Succinyl-diaminopimelate desuccinylase (375 aa).

A Zn(2+)-binding site is contributed by H66. Residue D68 is part of the active site. D99 lines the Zn(2+) pocket. The Proton acceptor role is filled by E133. Positions 134, 162, and 348 each coordinate Zn(2+).

This sequence belongs to the peptidase M20A family. DapE subfamily. Homodimer. Zn(2+) is required as a cofactor. Requires Co(2+) as cofactor.

It carries out the reaction N-succinyl-(2S,6S)-2,6-diaminopimelate + H2O = (2S,6S)-2,6-diaminopimelate + succinate. Its pathway is amino-acid biosynthesis; L-lysine biosynthesis via DAP pathway; LL-2,6-diaminopimelate from (S)-tetrahydrodipicolinate (succinylase route): step 3/3. Its function is as follows. Catalyzes the hydrolysis of N-succinyl-L,L-diaminopimelic acid (SDAP), forming succinate and LL-2,6-diaminopimelate (DAP), an intermediate involved in the bacterial biosynthesis of lysine and meso-diaminopimelic acid, an essential component of bacterial cell walls. The polypeptide is Succinyl-diaminopimelate desuccinylase (Buchnera aphidicola subsp. Acyrthosiphon pisum (strain APS) (Acyrthosiphon pisum symbiotic bacterium)).